We begin with the raw amino-acid sequence, 943 residues long: Isoleucine--tRNA ligase (943 aa).

The 'HIGH' region signature appears at 59–69; it reads PYANGQIHLGH. Position 577 (E577) interacts with L-isoleucyl-5'-AMP. The 'KMSKS' region signature appears at 618–622; the sequence is KMSKS. Residue K621 coordinates ATP. Residues C906, C909, C926, and C929 each coordinate Zn(2+).

Belongs to the class-I aminoacyl-tRNA synthetase family. IleS type 1 subfamily. In terms of assembly, monomer. The cofactor is Zn(2+).

The protein resides in the cytoplasm. The enzyme catalyses tRNA(Ile) + L-isoleucine + ATP = L-isoleucyl-tRNA(Ile) + AMP + diphosphate. Catalyzes the attachment of isoleucine to tRNA(Ile). As IleRS can inadvertently accommodate and process structurally similar amino acids such as valine, to avoid such errors it has two additional distinct tRNA(Ile)-dependent editing activities. One activity is designated as 'pretransfer' editing and involves the hydrolysis of activated Val-AMP. The other activity is designated 'posttransfer' editing and involves deacylation of mischarged Val-tRNA(Ile). In Xanthomonas campestris pv. campestris (strain B100), this protein is Isoleucine--tRNA ligase.